Consider the following 419-residue polypeptide: Methyltransferase/ribosomally synthesized type I borosin cyclic peptide precursor gjuMa (419 aa).

The methyltransferase domain stretch occupies residues 1-255; sequence MATPIATTTN…AISTLYVPPR (255 aa). Residues Arg-79, Tyr-83, and Tyr-105 contribute to the active site. The S-adenosyl-L-methionine site is built by Tyr-105, His-107, Val-110, Ala-137, Gln-179, Gly-217, Ser-248, and Thr-249. The tract at residues 256 to 381 is clasp domain; the sequence is DISPVDPTMA…GAVYALMSRP (126 aa). A precursor leader region spans residues 382 to 404; the sequence is TGDIAREKELTNDEIANNHGAPY. Ser-408 is subject to N-methylserine. Ala-409 carries the post-translational modification N-methylalanine. At Val-410 the chain carries N-methylvaline. An N-methylisoleucine mark is found at Ile-411 and Ile-412. N-methylalanine is present on residues Ala-413 and Ala-414. 2 positions are modified to N-methylisoleucine: Ile-415 and Ile-416.

It in the N-terminal section; belongs to the precorrin methyltransferase family. In terms of assembly, homodimer. In terms of processing, gjuMA automethylates at Ser-408, Ala-409, Val-410, Ile-411, Ile-412, Ala-413, Ala-414, Ile-415 and Ile-416 before being processed by ae prolyloligopeptidase which likely forms a peptidyl ester upon removal of the follower propeptide, which then undergoes macrocyclization with the N-terminus of the modified core peptide. Peptide backbone alpha-N-methylations change the physicochemical properties of amide bonds to provide structural constraints and other favorable characteristics including biological membrane permeability to peptides.

It participates in secondary metabolite biosynthesis. Functionally, fusion protein of the methyltransferase gjuM and the type I borosin core peptide; part of the gene cluster that mediates the biosynthesis of a type I borosin, a highly methylated cyclic peptide with potent biological activities. Type I borosins derive from the C-terminus of the fusion protein, and it is the same protein that methylates its own C-terminus using S-adenosyl methionine (SAM). The C-terminus is subsequently cleaved off and macrocyclized by a prolyloligopeptidase to give the final product. This Gymnopilus junonius (Spectacular rustgill mushroom) protein is Methyltransferase/ribosomally synthesized type I borosin cyclic peptide precursor gjuMa.